Here is a 431-residue protein sequence, read N- to C-terminus: F-box protein pof14 (431 aa).

The 15-residue stretch at 172–186 (CPDEILQLIFSYCYD) folds into the F-box; atypical domain.

In terms of assembly, component of the E3 ubiquitin ligase Skp1-Cullin-1-F-box (SCF) complex. Interacts with skp1, cul1 and erg9.

It is found in the cytoplasm. The protein resides in the nucleus. Its subcellular location is the endoplasmic reticulum. In terms of biological role, expression is induced during oxidative stress. Plays an essential, SCF-independent, role in the stress response to hydrogen peroxide for survival, by negatively regulating ergosterol synthesis via direct binding to the squalene synthase erg9. This chain is F-box protein pof14 (pof14), found in Schizosaccharomyces pombe (strain 972 / ATCC 24843) (Fission yeast).